Consider the following 142-residue polypeptide: MVLSPADKSNVKATWDKIGSHAGEYGGEALERTFASFPTTKTYFPHFDLSPGSAQVKAHGKKVADALTTAAGHLDDLPGALSALSDLHAHKLRVDPVNFKFLSHCLLVTLASHHPAEFTPAVHASLDKFFSAVSTVLTSKYR.

Residues 2-142 form the Globin domain; it reads VLSPADKSNV…VSTVLTSKYR (141 aa). At Ser4 the chain carries Phosphoserine. N6-succinyllysine occurs at positions 8 and 12. Residue Lys17 is modified to N6-acetyllysine; alternate. Lys17 carries the post-translational modification N6-succinyllysine; alternate. Tyr25 carries the phosphotyrosine modification. Ser36 is subject to Phosphoserine. N6-succinyllysine is present on Lys41. A Phosphoserine modification is found at Ser50. His59 contacts O2. His88 lines the heme b pocket. Ser103 is subject to Phosphoserine. Thr109 carries the phosphothreonine modification. Phosphoserine is present on Ser125. A phosphothreonine mark is found at Thr135 and Thr138. Ser139 carries the post-translational modification Phosphoserine.

Belongs to the globin family. In terms of assembly, heterotetramer of two alpha chains and two beta chains. As to expression, red blood cells.

Functionally, involved in oxygen transport from the lung to the various peripheral tissues. Its function is as follows. Hemopressin acts as an antagonist peptide of the cannabinoid receptor CNR1. Hemopressin-binding efficiently blocks cannabinoid receptor CNR1 and subsequent signaling. This Ursus maritimus (Polar bear) protein is Hemoglobin subunit alpha (HBA).